A 1261-amino-acid polypeptide reads, in one-letter code: Apoptotic protease-activating factor 1 (1261 aa).

Residues 1–90 (MEERARSRLL…GDLASLLHSD (90 aa)) enclose the CARD domain. Positions 106-417 (VSPSVQAILS…LELEEVEDVL (312 aa)) constitute an NB-ARC domain. Position 154 to 161 (154 to 161 (GMAGSGKS)) interacts with ATP. WD repeat units lie at residues 615-654 (PHQG…KLLE), 657-696 (AHEE…LIRE), 700-743 (EHEE…SQNT), 746-785 (GHME…EWKS), 798-836 (EIKA…LLLK), 840-879 (SRLS…KKAE), 882-921 (GHLS…TSSA), 964-1003 (ELSS…ASVK), 1006-1045 (GHTK…CMVL), 1047-1088 (GHME…MLQD), 1091-1130 (CHEG…MLFL), 1133-1172 (GHKD…LLKI), and 1184-1223 (YHAG…QTFY).

In terms of assembly, monomer. Oligomerizes upon binding of cytochrome c and dATP.

The protein localises to the cytoplasm. Functionally, oligomeric Apaf-1 mediates the cytochrome c-dependent autocatalytic activation of pro-caspase-9 (Apaf-3), leading to the activation of caspase-3 and apoptosis. This activation requires ATP. The chain is Apoptotic protease-activating factor 1 (apaf1) from Danio rerio (Zebrafish).